Reading from the N-terminus, the 195-residue chain is Xanthine phosphoribosyltransferase (195 aa).

Leu20 and Asn27 together coordinate xanthine. 128–132 (ANGQA) lines the 5-phospho-alpha-D-ribose 1-diphosphate pocket. Lys156 is a xanthine binding site.

The protein belongs to the purine/pyrimidine phosphoribosyltransferase family. Xpt subfamily. As to quaternary structure, homodimer.

The protein localises to the cytoplasm. The enzyme catalyses XMP + diphosphate = xanthine + 5-phospho-alpha-D-ribose 1-diphosphate. Its pathway is purine metabolism; XMP biosynthesis via salvage pathway; XMP from xanthine: step 1/1. Its function is as follows. Converts the preformed base xanthine, a product of nucleic acid breakdown, to xanthosine 5'-monophosphate (XMP), so it can be reused for RNA or DNA synthesis. The chain is Xanthine phosphoribosyltransferase from Lactiplantibacillus plantarum (strain ATCC BAA-793 / NCIMB 8826 / WCFS1) (Lactobacillus plantarum).